A 1054-amino-acid polypeptide reads, in one-letter code: Leucine-rich repeats and immunoglobulin-like domains protein 2 (1054 aa).

The signal sequence occupies residues methionine 1–alanine 39. One can recognise an LRRNT domain in the interval glycine 40–serine 74. LRR repeat units follow at residues aspartate 75–glutamine 96, threonine 97–threonine 118, asparagine 120–leucine 141, alanine 144–arginine 165, serine 167–asparagine 188, serine 192–leucine 213, histidine 215–glycine 236, serine 239–glycine 260, asparagine 263–glycine 284, methionine 287–phenylalanine 308, arginine 311–glycine 332, leucine 335–phenylalanine 356, asparagine 359–phenylalanine 381, serine 386–glycine 407, and serine 410–glutamine 431. An N-linked (GlcNAc...) asparagine glycan is attached at asparagine 90. Asparagine 120 is a glycosylation site (N-linked (GlcNAc...) asparagine). 2 N-linked (GlcNAc...) asparagine glycosylation sites follow: asparagine 172 and asparagine 188. Residue asparagine 273 is glycosylated (N-linked (GlcNAc...) asparagine). N-linked (GlcNAc...) asparagine glycans are attached at residues asparagine 440, asparagine 467, asparagine 513, asparagine 570, and asparagine 588. Residues serine 442–aspartate 493 form the LRRCT domain. Ig-like C2-type domains lie at proline 497–threonine 596, proline 601–threonine 690, and proline 695–serine 784. Cysteine 518 and cysteine 579 form a disulfide bridge. Cysteines 622 and 674 form a disulfide. N-linked (GlcNAc...) asparagine glycosylation is found at asparagine 686 and asparagine 727. Cysteine 716 and cysteine 765 are joined by a disulfide. Residues isoleucine 807–isoleucine 827 traverse the membrane as a helical segment. A Phosphotyrosine modification is found at tyrosine 905. N-linked (GlcNAc...) asparagine glycosylation occurs at asparagine 1024.

The protein localises to the cell membrane. Its subcellular location is the cytoplasm. In Mus musculus (Mouse), this protein is Leucine-rich repeats and immunoglobulin-like domains protein 2 (Lrig2).